A 1315-amino-acid chain; its full sequence is Tetratricopeptide repeat protein 21B (1315 aa).

TPR repeat units follow at residues 108–141 (RKALYHAGLFLWHIGRHDKAREYIDRMSKMPHDS), 145–178 (PILKAWLDITRGKEPYAKKALRYFEEGLQDGNDI), 192–225 (QNYSGALETVSQIIVNFPSFLPAFEKKMKLQLAL), 285–323 (AQLFYKITLAFSRTCGRNQLILQKVQSFLEKAFSLTPQQ), 324–357 (AEIATELGYQMILQGKVKEAWKWYRTAMTLNESN), 492–525 (PQAVFLMAKVKYLSGDTEAAYNNLQHCLEHSPSY), 563–596 (PLYHLIKAQSQKKMGEVAEAIKTLHMAMNLPGMR), 616–649 (LSIFLELVEVHRLNGEQHEAAKVLQDAIHEFSGT), 721–754 (PRSFLLLGDAYMNIQEPEEAIVAYEQALNQNPKD), 756–788 (TLARKIGKALVKTHNYSKAITYYEAALKSGQQN), 790–821 (LCYDLAELLLRLKLYEKAEKVLQHSLAHEPVS), 830–863 (GRSQVLLAKVYSKMERPSDAIAALQQARELQARI), 883–916 (AEICAEIAKHSAAQRDYEKAITFYREALVHCETD), 918–950 (KIMLELAQLYLAQEDLDASLRHCALLLQRDQDN), 951–984 (EPATMLMADLMFRKQDYEQAVYHLQQLLDRKPDN), 1022–1055 (PGFQYCKGLHFWYTGEPNDALRHFNKARKDSDWG), 1196–1229 (EKSWLLLADIYIQSAKYDMAEELLKRCLCHNRSC), 1231–1263 (KAYEYMGYIMEKEQAYTDAAFNYEMAWKHSNQT), and 1265–1298 (PAVGYKLAFNYLKAKRYVDAIDVCHQVLEAHPTY).

Belongs to the TTC21 family. As to quaternary structure, component of the IFT complex A (IFT-A) complex. IFT-A complex is divided into a core subcomplex composed of IFT122:IFT140:WDR19 which is associated with TULP3 and a peripheral subcomplex composed of IFT43:WDR35:TTC21B. Interacts directy with WDR35 and TTC21B. Interacts with TTC25.

The protein localises to the cytoplasm. The protein resides in the cytoskeleton. Its subcellular location is the cilium axoneme. Component of the IFT complex A (IFT-A), a complex required for retrograde ciliary transport and entry into cilia of G protein-coupled receptors (GPCRs). Essential for retrograde trafficking of IFT-1, IFT-B and GPCRs. Negatively modulates the SHH signal transduction. The chain is Tetratricopeptide repeat protein 21B (Ttc21b) from Mus musculus (Mouse).